The following is a 129-amino-acid chain: MTTVEQIIDQLKTLTLIESSELVKQIEETFGVDASAPVGGAIMMAPGQESAGQEVVEEKTTFDVIVKDIASDKRVSVLKVIRKLTSLGLAEAKEFTVSLPKALKEGISKEEAAEAKKDLELAGAVVDIV.

The protein belongs to the bacterial ribosomal protein bL12 family. Homodimer. Part of the ribosomal stalk of the 50S ribosomal subunit. Forms a multimeric L10(L12)X complex, where L10 forms an elongated spine to which 2 to 4 L12 dimers bind in a sequential fashion. Binds GTP-bound translation factors.

Its subcellular location is the plastid. It localises to the chloroplast. Its function is as follows. Forms part of the ribosomal stalk which helps the ribosome interact with GTP-bound translation factors. Is thus essential for accurate translation. The protein is Large ribosomal subunit protein bL12c of Tupiella akineta (Green alga).